Reading from the N-terminus, the 252-residue chain is Coenzyme F420:L-glutamate ligase (252 aa).

GTP is bound by residues 11–14, 45–46, and lysine 50; these read MPLV and ET. Position 115 (aspartate 115) interacts with a divalent metal cation. Asparagine 118 provides a ligand contact to GTP. Positions 156, 157, and 214 each coordinate a divalent metal cation. Residue 212–219 coordinates GTP; it reads MGQADEGV.

The protein belongs to the CofE family. Homodimer. Mg(2+) serves as cofactor. The cofactor is Mn(2+). Requires K(+) as cofactor.

It carries out the reaction oxidized coenzyme F420-0 + GTP + L-glutamate = oxidized coenzyme F420-1 + GDP + phosphate + H(+). The enzyme catalyses oxidized coenzyme F420-1 + GTP + L-glutamate = oxidized coenzyme F420-2 + GDP + phosphate + H(+). The protein operates within cofactor biosynthesis; coenzyme F420 biosynthesis. Its function is as follows. Catalyzes the GTP-dependent successive addition of two or more gamma-linked L-glutamates to the L-lactyl phosphodiester of 7,8-didemethyl-8-hydroxy-5-deazariboflavin (F420-0) to form coenzyme F420-0-glutamyl-glutamate (F420-2) or polyglutamated F420 derivatives. In Methanothermobacter thermautotrophicus (strain ATCC 29096 / DSM 1053 / JCM 10044 / NBRC 100330 / Delta H) (Methanobacterium thermoautotrophicum), this protein is Coenzyme F420:L-glutamate ligase.